A 406-amino-acid chain; its full sequence is Renin (406 aa).

The first 23 residues, 1 to 23 (MDGWRRMPRWGLLLLLWGSCTFG), serve as a signal peptide directing secretion. The propeptide at 24-66 (LPTDTTTFKRIFLKRMPSIRESLKERGVDMARLGPEWSQPMKR) is activation peptide. An N-linked (GlcNAc...) asparagine glycan is attached at N71. The region spanning 86–403 (YYGEIGIGTP…DRRNNRIGFA (318 aa)) is the Peptidase A1 domain. The active site involves D104. The cysteines at positions 117 and 124 are disulfide-linked. The N-linked (GlcNAc...) asparagine glycan is linked to N141. A disulfide bridge links C283 with C287. D292 is a catalytic residue. C325 and C362 are oxidised to a cystine.

The protein belongs to the peptidase A1 family. In terms of assembly, interacts with ATP6AP2.

The protein resides in the secreted. It is found in the membrane. It catalyses the reaction Cleavage of Leu-|-Xaa bond in angiotensinogen to generate angiotensin I.. Interaction with ATP6AP2 results in a 5-fold increased efficiency in angiotensinogen processing. Its function is as follows. Renin is a highly specific endopeptidase, whose only known function is to generate angiotensin I from angiotensinogen in the plasma, initiating a cascade of reactions that produce an elevation of blood pressure and increased sodium retention by the kidney. The chain is Renin (REN) from Macaca fascicularis (Crab-eating macaque).